The primary structure comprises 331 residues: MAVFTAVSNADLALWMRHYDLGDVVAFRGIPSGIENSNFFLTTTRGEYVLTIFENLTAGQLPFYVDLMSHLAKHGVPVPAPVARDDGTLFGELHGKPAAIVTKLEGAAQLAPGVEHCVEVGQMLARMHLAGRDYPRHQPNLRSLPWWRDTVPAIAPFVTGEQRALLEGELAHQAAFFASDDYAALPEGPCHCDLFRDNALFAHAEPDTGHSVRLGGFFDFYFAGCDKWLFDVAVTVNDWCVDLPTGALDAARADALLRAYQTVRPFTAGERRHWGDMLRAGAYRFWVSRLYDFHLPRAAQMLKPHDPGHFERILRERIAHAGALPETHACN.

It belongs to the pseudomonas-type ThrB family.

It carries out the reaction L-homoserine + ATP = O-phospho-L-homoserine + ADP + H(+). Its pathway is amino-acid biosynthesis; L-threonine biosynthesis; L-threonine from L-aspartate: step 4/5. This Burkholderia pseudomallei (strain 1710b) protein is Homoserine kinase.